The following is a 135-amino-acid chain: T-cell receptor gamma chain V region V108A (135 aa).

The N-terminal stretch at 1 to 18 (MLLLRWFTSCCLWVFGLG) is a signal peptide. The v segment stretch occupies residues 19-116 (QLEQTELSVT…EATYYCAVWM (98 aa)). The tract at residues 117 to 135 (RWSSGFHKVFAEGTKLIVI) is j segment.

The protein is T-cell receptor gamma chain V region V108A of Mus musculus (Mouse).